Reading from the N-terminus, the 359-residue chain is Peptide methionine sulfoxide reductase MsrA/MsrB (359 aa).

Positions 36 to 189 (RVIYLAGGCF…PGGYCHIDLK (154 aa)) are peptide methionine sulfoxide reductase A. Residue Cys44 is part of the active site. In terms of domain architecture, MsrB spans 206 to 329 (DEVLKKKLTK…NSAALRFIPL (124 aa)). Residue Cys318 is the Nucleophile of the active site.

In the N-terminal section; belongs to the MsrA Met sulfoxide reductase family. It in the C-terminal section; belongs to the MsrB Met sulfoxide reductase family.

It catalyses the reaction L-methionyl-[protein] + [thioredoxin]-disulfide + H2O = L-methionyl-(S)-S-oxide-[protein] + [thioredoxin]-dithiol. It carries out the reaction [thioredoxin]-disulfide + L-methionine + H2O = L-methionine (S)-S-oxide + [thioredoxin]-dithiol. The catalysed reaction is L-methionyl-[protein] + [thioredoxin]-disulfide + H2O = L-methionyl-(R)-S-oxide-[protein] + [thioredoxin]-dithiol. In terms of biological role, has an important function as a repair enzyme for proteins that have been inactivated by oxidation. Catalyzes the reversible oxidation-reduction of methionine sulfoxide in proteins to methionine. In Helicobacter pylori (strain J99 / ATCC 700824) (Campylobacter pylori J99), this protein is Peptide methionine sulfoxide reductase MsrA/MsrB (msrAB).